The following is a 206-amino-acid chain: MARYIGPKCKLSRREGTDLFLKSGARALDSKCKAENVPGQHGQRRGRLSDYGLQLREKQKVRRIYGVLERQFRGYYQEASRRKGSTGENLLQLLECRLDNVVYRMGFGSTRSESRQLVSHKAITVNGQTVNIPSYQVKAGDVVAVREKSKNQLRIAQALELCGQRGRVEWVEVDLDKKAGTFKSAPARSDLSADINENLIVELYSK.

Residues Cys-96 to Ala-156 enclose the S4 RNA-binding domain.

It belongs to the universal ribosomal protein uS4 family. Part of the 30S ribosomal subunit. Contacts protein S5. The interaction surface between S4 and S5 is involved in control of translational fidelity.

Its function is as follows. One of the primary rRNA binding proteins, it binds directly to 16S rRNA where it nucleates assembly of the body of the 30S subunit. In terms of biological role, with S5 and S12 plays an important role in translational accuracy. The polypeptide is Small ribosomal subunit protein uS4 (Pseudomonas aeruginosa (strain LESB58)).